A 660-amino-acid polypeptide reads, in one-letter code: Dual specificity mitogen-activated protein kinase kinase 1 (660 aa).

The segment covering 1 to 57 (MNTNTNTNTNISSSGNNIINTPTTNNNNKNNNNNNNNNNNSNNSNNNSSNNNNNNNN) has biased composition (low complexity). Disordered regions lie at residues 1–60 (MNTN…NAVG), 105–169 (KGES…FNNL), and 204–229 (NNNYNNYNNNNNSNNNNNNYNNSNNN). K105 participates in a covalent cross-link: Glycyl lysine isopeptide (Lys-Gly) (interchain with G-Cter in SUMO). A compositionally biased stretch (polar residues) spans 123 to 148 (LHSNLNPQLLASPTSSESMDFNQGFY). The segment covering 149-169 (NNNNNNNNNNNNNNLNNFNNL) has biased composition (low complexity). The 350-residue stretch at 292–641 (LKIIRVLGRG…ASNLLNHEFV (350 aa)) folds into the Protein kinase domain. Residues 298–306 (LGRGAGGVV) and K321 each bind ATP. The Proton acceptor role is filled by D414. Disordered regions lie at residues 491 to 510 (SNLPHQQQQPLQQQQQQQQQ) and 539 to 573 (NNSNNNIRNSNNNNNNNNNNNNNNNNNNNNNVLDI). 2 stretches are compositionally biased toward low complexity: residues 496–510 (QQQQPLQQQQQQQQQ) and 539–569 (NNSNNNIRNSNNNNNNNNNNNNNNNNNNNNN).

The protein belongs to the protein kinase superfamily. STE Ser/Thr protein kinase family. MAP kinase kinase subfamily. Interacts with mip1. It depends on Mg(2+) as a cofactor. In terms of processing, sumoylated and ubiquitinated in response to chemoattractant stimulation. Sumoylation is linked to kinase activation and results in translocation.

The protein resides in the cytoplasm. The protein localises to the nucleus. It carries out the reaction L-seryl-[protein] + ATP = O-phospho-L-seryl-[protein] + ADP + H(+). It catalyses the reaction L-threonyl-[protein] + ATP = O-phospho-L-threonyl-[protein] + ADP + H(+). The catalysed reaction is L-tyrosyl-[protein] + ATP = O-phospho-L-tyrosyl-[protein] + ADP + H(+). Required for cAMP-mediated activation of guanylyl cyclase activity and plays an essential role in aggregation, morphogenesis, and chemotaxis. Appears to act upstream of erk1 but not erk2. The chain is Dual specificity mitogen-activated protein kinase kinase 1 from Dictyostelium discoideum (Social amoeba).